We begin with the raw amino-acid sequence, 417 residues long: Odorant receptor 65a (417 aa).

The Cytoplasmic segment spans residues Met1–Arg62. The chain crosses the membrane as a helical span at residues Ile63–Tyr83. At Gly84–Asp98 the chain is on the extracellular side. A helical transmembrane segment spans residues Leu99–Ala119. The Cytoplasmic portion of the chain corresponds to Gly120 to His152. A helical membrane pass occupies residues Phe153–Ile173. The Extracellular segment spans residues Lys174–Tyr206. A helical transmembrane segment spans residues Ile207–Val227. The Cytoplasmic portion of the chain corresponds to Glu228–Gly290. Residues Ala291–Leu311 form a helical membrane-spanning segment. At Ala312 to Asn316 the chain is on the extracellular side. A helical transmembrane segment spans residues Pro317 to Trp337. Over Ser338 to Phe393 the chain is Cytoplasmic. A helical membrane pass occupies residues Asn394–Asn414. The Extracellular portion of the chain corresponds to Thr415–Glu417.

It belongs to the insect chemoreceptor superfamily. Heteromeric odorant receptor channel (TC 1.A.69) family. Or49a subfamily. Interacts with Orco. Complexes exist early in the endomembrane system in olfactory sensory neurons (OSNs), coupling these complexes to the conserved ciliary trafficking pathway. In terms of tissue distribution, expressed in olfactory sensory neurons in the antenna.

The protein resides in the cell membrane. Functionally, odorant receptor which mediates acceptance or avoidance behavior, depending on its substrates. The odorant receptor repertoire encodes a large collection of odor stimuli that vary widely in identity, intensity, and duration. May form a complex with Orco to form odorant-sensing units, providing sensitive and prolonged odorant signaling and calcium permeability. Involved in olfactory communication for modulating aggression through the sensing of the male-specific pheromone 11-cis-vaccenyl acetate (cVA). Although acute exposure to cVA elicites aggression through Or67d olfactory receptor neurons (ORNs), chronic cVA exposure reduces aggression through Or65a ORNs. Moreover, cVA leads to generalized learning with mated females. It is a major component of the male cuticular hydrocarbon profile, but it is not found on virgin females. During copulation, cVA is transferred to the female in ejaculate along with sperm and peptides that decrease her sexual receptivity. The protein is Odorant receptor 65a (Or65a) of Drosophila melanogaster (Fruit fly).